Reading from the N-terminus, the 324-residue chain is Dermonecrotic toxin Hl-PLD1 (324 aa).

The signal sequence occupies residues 1–35; it reads MAHCYYNSKRGCNRVMKTVALVVLISTVMVEESRG. The active site involves H50. 2 residues coordinate Mg(2+): E70 and D72. H86 functions as the Nucleophile in the catalytic mechanism. 2 cysteine pairs are disulfide-bonded: C90/C96 and C92/C236. D130 is a binding site for Mg(2+).

This sequence belongs to the arthropod phospholipase D family. Class II subfamily. Mg(2+) is required as a cofactor. In terms of tissue distribution, expressed by the venom gland.

Its subcellular location is the secreted. It catalyses the reaction an N-(acyl)-sphingosylphosphocholine = an N-(acyl)-sphingosyl-1,3-cyclic phosphate + choline. The enzyme catalyses an N-(acyl)-sphingosylphosphoethanolamine = an N-(acyl)-sphingosyl-1,3-cyclic phosphate + ethanolamine. It carries out the reaction a 1-acyl-sn-glycero-3-phosphocholine = a 1-acyl-sn-glycero-2,3-cyclic phosphate + choline. The catalysed reaction is a 1-acyl-sn-glycero-3-phosphoethanolamine = a 1-acyl-sn-glycero-2,3-cyclic phosphate + ethanolamine. Its function is as follows. Dermonecrotic toxins cleave the phosphodiester linkage between the phosphate and headgroup of certain phospholipids (sphingolipid and lysolipid substrates), forming an alcohol (often choline) and a cyclic phosphate. This toxin acts on sphingomyelin (SM) with a high activity. It may also act on ceramide phosphoethanolamine (CPE), lysophosphatidylcholine (LPC) and lysophosphatidylethanolamine (LPE), but not on lysophosphatidylserine (LPS), and lysophosphatidylglycerol (LPG). It acts by transphosphatidylation, releasing exclusively cyclic phosphate products as second products. In vivo, shows dermonecrotic activity when intradermally injected into rabbit skin and is lethal to mice. Induces increased vascular permeability, edema, inflammatory response, and platelet aggregation. Does not show hemolytic activity (at up to 50 ug). This chain is Dermonecrotic toxin Hl-PLD1, found in Hemiscorpius lepturus (Scorpion).